The chain runs to 366 residues: Ferrochelatase (366 aa).

The Fe cation site is built by histidine 210 and glutamate 293.

Belongs to the ferrochelatase family.

The protein localises to the cytoplasm. It carries out the reaction heme b + 2 H(+) = protoporphyrin IX + Fe(2+). Its pathway is porphyrin-containing compound metabolism; protoheme biosynthesis; protoheme from protoporphyrin-IX: step 1/1. Functionally, catalyzes the ferrous insertion into protoporphyrin IX. In Leptospira borgpetersenii serovar Hardjo-bovis (strain JB197), this protein is Ferrochelatase.